The chain runs to 860 residues: MSAIESAIKPQHTPMMQQYLGIKAKHPHQLVFYRMGDFYELFYEDARRAAELLDITLTQRGQSGGQPIPMAGVPFHAAEGYIGRLVRLGESVVICEQVGDPAASKGPVERKVVRVVTPGTLSDEAFLEEKSDNLLLAISAYKDLFGLATLDIAGGRFLIQEVRGVEALASELQRLRPAEILVSEQFPFLTLLENYTGVQKQPPWYFEQETAQRLLCQQFRTKDLAGFDCEGMSAAIEAAGCLFQYAQETQRSQLPHIRTMIRERREDSIILDAASRRNLEIDVNLAGDYRHTLAWVMDKSATAMGSRMLRRWLNRPLRSQEEVRQRQNAIKELLEDYQFEALHETLKQIGDSERILSRVALRSARPRDLARLRDTLTLLPDLQKQMEELNDTHLRRLAKQVSEFPDIADLLSRAIEENPPVVIRDGGVLRQGFDEELDELRSISENAGDYLLEIEKREKERTQLSSLKVGYNRVHGYFIELSRTQSDQAPADYIRRQTLKNAERFITPELKTFEDKALSAKSRALSREKMLYDQILETIVEQLAPLQDSARALSELDVLSNFAERALTLNLVCPDLTDEHMLHIEGGRHPVVEQVSQDPFVPNDLNLQDKHRMLIITGPNMGGKSTYMRQTACIVILAYCGSFVPAAKVVIGPIDRVFTRMGSSDDIAGGRSTFMVEMTETANILHYATRQSLVLMDEVGRGTSTFDGLSLAWACAEHLAREIQAFTLFATHYFELTALPKTHANVANVHLTATEHNDSIVFLHTVHEGPASKSYGIQVAQLAGVPPQVINQAQKQLKQLESGASKPALTAPAPSLQDDLFARVEPSEVETRLQKLDVDSLSPREALNMLYELKTMSENS.

An ATP-binding site is contributed by 618-625; the sequence is GPNMGGKS.

The protein belongs to the DNA mismatch repair MutS family.

Functionally, this protein is involved in the repair of mismatches in DNA. It is possible that it carries out the mismatch recognition step. This protein has a weak ATPase activity. This Hahella chejuensis (strain KCTC 2396) protein is DNA mismatch repair protein MutS.